The sequence spans 343 residues: Pentatricopeptide repeat-containing protein At1g06270 (343 aa).

PPR repeat units follow at residues Pro-98–Pro-133, Asn-134–Pro-169, Asp-170–Pro-204, Asp-205–Pro-240, Arg-241–Val-275, and Glu-276–Pro-310.

It belongs to the PPR family. P subfamily.

This Arabidopsis thaliana (Mouse-ear cress) protein is Pentatricopeptide repeat-containing protein At1g06270.